The following is a 226-amino-acid chain: Thiamine-phosphate synthase (226 aa).

4-amino-2-methyl-5-(diphosphooxymethyl)pyrimidine contacts are provided by residues 46 to 50 and Asn87; that span reads QLRDK. Mg(2+) is bound by residues Asp88 and Asp107. Position 126 (Ser126) interacts with 4-amino-2-methyl-5-(diphosphooxymethyl)pyrimidine. 152–154 provides a ligand contact to 2-[(2R,5Z)-2-carboxy-4-methylthiazol-5(2H)-ylidene]ethyl phosphate; that stretch reads TPT. Position 155 (Lys155) interacts with 4-amino-2-methyl-5-(diphosphooxymethyl)pyrimidine. Gly183 lines the 2-[(2R,5Z)-2-carboxy-4-methylthiazol-5(2H)-ylidene]ethyl phosphate pocket.

Belongs to the thiamine-phosphate synthase family. Requires Mg(2+) as cofactor.

The catalysed reaction is 2-[(2R,5Z)-2-carboxy-4-methylthiazol-5(2H)-ylidene]ethyl phosphate + 4-amino-2-methyl-5-(diphosphooxymethyl)pyrimidine + 2 H(+) = thiamine phosphate + CO2 + diphosphate. It carries out the reaction 2-(2-carboxy-4-methylthiazol-5-yl)ethyl phosphate + 4-amino-2-methyl-5-(diphosphooxymethyl)pyrimidine + 2 H(+) = thiamine phosphate + CO2 + diphosphate. The enzyme catalyses 4-methyl-5-(2-phosphooxyethyl)-thiazole + 4-amino-2-methyl-5-(diphosphooxymethyl)pyrimidine + H(+) = thiamine phosphate + diphosphate. It functions in the pathway cofactor biosynthesis; thiamine diphosphate biosynthesis; thiamine phosphate from 4-amino-2-methyl-5-diphosphomethylpyrimidine and 4-methyl-5-(2-phosphoethyl)-thiazole: step 1/1. Its function is as follows. Condenses 4-methyl-5-(beta-hydroxyethyl)thiazole monophosphate (THZ-P) and 2-methyl-4-amino-5-hydroxymethyl pyrimidine pyrophosphate (HMP-PP) to form thiamine monophosphate (TMP). The sequence is that of Thiamine-phosphate synthase from Mycobacterium sp. (strain JLS).